A 489-amino-acid polypeptide reads, in one-letter code: Rhamnulokinase (489 aa).

13–17 (ASSGR) provides a ligand contact to ATP. The cysteines at positions 68 and 222 are disulfide-linked. Substrate-binding positions include Gly83 and 236-238 (HDT). Asp237 (proton acceptor) is an active-site residue. Thr259 provides a ligand contact to ATP. A substrate-binding site is contributed by Asn296. Gln304 contributes to the ATP binding site. An intrachain disulfide couples Cys353 to Cys370. Gly402 provides a ligand contact to ATP. Cysteines 413 and 417 form a disulfide.

This sequence belongs to the rhamnulokinase family. In terms of assembly, monomer. The cofactor is Mg(2+).

It carries out the reaction L-rhamnulose + ATP = L-rhamnulose 1-phosphate + ADP + H(+). It participates in carbohydrate degradation; L-rhamnose degradation; glycerone phosphate from L-rhamnose: step 2/3. Involved in the catabolism of L-rhamnose (6-deoxy-L-mannose). Catalyzes the transfer of the gamma-phosphate group from ATP to the 1-hydroxyl group of L-rhamnulose to yield L-rhamnulose 1-phosphate. This Escherichia coli O7:K1 (strain IAI39 / ExPEC) protein is Rhamnulokinase.